The sequence spans 92 residues: Small ribosomal subunit protein uS19 (92 aa).

It belongs to the universal ribosomal protein uS19 family.

Functionally, protein S19 forms a complex with S13 that binds strongly to the 16S ribosomal RNA. This Vibrio atlanticus (strain LGP32) (Vibrio splendidus (strain Mel32)) protein is Small ribosomal subunit protein uS19.